The chain runs to 1259 residues: Ankyrin repeat and sterile alpha motif domain-containing protein 1B (1259 aa).

7 ANK repeats span residues Gly2–Leu31, Ser58–Val87, Lys91–Arg120, Glu127–Ile156, Lys160–Ser189, Arg193–Cys222, and Glu225–Ile254. Residues His298–Thr325 form a disordered region. Over residues Glu306 to Thr325 the composition is skewed to polar residues. Phosphoserine occurs at positions 310, 311, 315, 353, and 364. 4 disordered regions span residues Glu367 to Pro401, Pro490 to Thr513, Cys556 to Pro614, and Thr631 to Val661. Over residues Asn371–Leu384 the composition is skewed to polar residues. Phosphothreonine is present on Thr503. 2 positions are modified to phosphoserine: Ser507 and Ser510. A compositionally biased stretch (low complexity) spans Cys556–Thr574. The span at Thr575–Asp587 shows a compositional bias: basic and acidic residues. Ser738 bears the Phosphoserine mark. The segment at Val753–Thr776 is disordered. Residue Thr772 is modified to Phosphothreonine. A Phosphoserine modification is found at Ser774. 2 SAM domains span residues Cys809–Met875 and Tyr883–Asp948. Tyr900 is modified (phosphotyrosine). Residue His934 is a short sequence motif, nuclear localization signal. Residues Gly943 to Asp988 are disordered. The segment covering Thr968 to Thr983 has biased composition (low complexity). Ser973 carries the phosphoserine modification. A Phosphotyrosine modification is found at Tyr1006. In terms of domain architecture, PID spans Ile1055 to Ile1212. Residues His1196–Arg1216 are disordered.

As to quaternary structure, interacts with EPHA8. Isoform 2 interacts with COIL.

It is found in the cytoplasm. Its subcellular location is the nucleus. It localises to the postsynaptic density. The protein resides in the cell projection. The protein localises to the dendritic spine. Its function is as follows. Isoform 2 may participate in the regulation of nucleoplasmic coilin protein interactions in neuronal and transformed cells. The chain is Ankyrin repeat and sterile alpha motif domain-containing protein 1B (Anks1b) from Mus musculus (Mouse).